We begin with the raw amino-acid sequence, 438 residues long: Glucose-6-phosphate isomerase (438 aa).

The active-site Proton donor is glutamate 289. Catalysis depends on residues histidine 310 and lysine 424.

The protein belongs to the GPI family.

It is found in the cytoplasm. The enzyme catalyses alpha-D-glucose 6-phosphate = beta-D-fructose 6-phosphate. It functions in the pathway carbohydrate biosynthesis; gluconeogenesis. Its pathway is carbohydrate degradation; glycolysis; D-glyceraldehyde 3-phosphate and glycerone phosphate from D-glucose: step 2/4. In terms of biological role, catalyzes the reversible isomerization of glucose-6-phosphate to fructose-6-phosphate. The polypeptide is Glucose-6-phosphate isomerase (Oenococcus oeni (strain ATCC BAA-331 / PSU-1)).